A 305-amino-acid polypeptide reads, in one-letter code: GTPase Era (305 aa).

Residues 13–181 (RCGYVAIVGR…EKLVAERLPE (169 aa)) form the Era-type G domain. Positions 21–28 (GRPNVGKS) are G1. Position 21–28 (21–28 (GRPNVGKS)) interacts with GTP. The G2 stretch occupies residues 47–51 (QTTRH). The segment at 68-71 (DTPG) is G3. GTP contacts are provided by residues 68-72 (DTPGL) and 130-133 (NKTD). The tract at residues 130–133 (NKTD) is G4. The G5 stretch occupies residues 160–162 (ISA). One can recognise a KH type-2 domain in the interval 204–288 (VREKIMRQLG…MLNLWVKVKG (85 aa)).

It belongs to the TRAFAC class TrmE-Era-EngA-EngB-Septin-like GTPase superfamily. Era GTPase family. As to quaternary structure, monomer.

It is found in the cytoplasm. Its subcellular location is the cell inner membrane. An essential GTPase that binds both GDP and GTP, with rapid nucleotide exchange. Plays a role in 16S rRNA processing and 30S ribosomal subunit biogenesis and possibly also in cell cycle regulation and energy metabolism. The sequence is that of GTPase Era from Pseudomonas aeruginosa (strain LESB58).